The following is a 140-amino-acid chain: Holo-[acyl-carrier-protein] synthase (140 aa).

The Mg(2+) site is built by Asp8 and Glu62.

The protein belongs to the P-Pant transferase superfamily. AcpS family. It depends on Mg(2+) as a cofactor.

It is found in the cytoplasm. It catalyses the reaction apo-[ACP] + CoA = holo-[ACP] + adenosine 3',5'-bisphosphate + H(+). Its function is as follows. Transfers the 4'-phosphopantetheine moiety from coenzyme A to a Ser of acyl-carrier-protein. This chain is Holo-[acyl-carrier-protein] synthase, found in Cupriavidus pinatubonensis (strain JMP 134 / LMG 1197) (Cupriavidus necator (strain JMP 134)).